The primary structure comprises 710 residues: DNA polymerase epsilon subunit B (710 aa).

The tract at residues 116–167 is disordered; it reads FLKRPNSPTDTEITTLSQGSATSVVNPDSHSPMMLEEGSPINSDSEPISEHE. A compositionally biased stretch (polar residues) spans 121 to 144; sequence NSPTDTEITTLSQGSATSVVNPDS.

This sequence belongs to the DNA polymerase epsilon subunit B family. Heterotetramer. Consists of four subunits: POL2, DPB2, DPB3 and DPB4.

It localises to the nucleus. In terms of biological role, as accessory component of the DNA polymerase epsilon (DNA polymerase II) participates in chromosomal DNA replication. The sequence is that of DNA polymerase epsilon subunit B (DPB2) from Kluyveromyces lactis (strain ATCC 8585 / CBS 2359 / DSM 70799 / NBRC 1267 / NRRL Y-1140 / WM37) (Yeast).